A 422-amino-acid polypeptide reads, in one-letter code: Histidine--tRNA ligase (422 aa).

The protein belongs to the class-II aminoacyl-tRNA synthetase family. As to quaternary structure, homodimer.

The protein localises to the cytoplasm. The catalysed reaction is tRNA(His) + L-histidine + ATP = L-histidyl-tRNA(His) + AMP + diphosphate + H(+). In Vibrio parahaemolyticus serotype O3:K6 (strain RIMD 2210633), this protein is Histidine--tRNA ligase.